Reading from the N-terminus, the 417-residue chain is NADH-quinone oxidoreductase subunit D (417 aa).

Belongs to the complex I 49 kDa subunit family. As to quaternary structure, NDH-1 is composed of 14 different subunits. Subunits NuoB, C, D, E, F, and G constitute the peripheral sector of the complex.

Its subcellular location is the cell inner membrane. It catalyses the reaction a quinone + NADH + 5 H(+)(in) = a quinol + NAD(+) + 4 H(+)(out). In terms of biological role, NDH-1 shuttles electrons from NADH, via FMN and iron-sulfur (Fe-S) centers, to quinones in the respiratory chain. The immediate electron acceptor for the enzyme in this species is believed to be ubiquinone. Couples the redox reaction to proton translocation (for every two electrons transferred, four hydrogen ions are translocated across the cytoplasmic membrane), and thus conserves the redox energy in a proton gradient. This chain is NADH-quinone oxidoreductase subunit D, found in Acidovorax sp. (strain JS42).